We begin with the raw amino-acid sequence, 507 residues long: Cytochrome P450 4X1 (507 aa).

Residues 14–34 (LHLALVFCLALVLMQAVKLYL) form a helical membrane-spanning segment. Cys452 is a heme binding site.

It belongs to the cytochrome P450 family. It depends on heme as a cofactor. Expressed at high levels in brain, mainly in neurons in different regions, including brain stem, hippocampus, cortex and cerebellum. Also expressed in cerebral vasculature. Not detected in kidney, nor liver.

Its subcellular location is the endoplasmic reticulum membrane. It is found in the microsome membrane. It catalyses the reaction N-(5Z,8Z,11Z,14Z-eicosatetraenoyl)-ethanolamine + reduced [NADPH--hemoprotein reductase] + O2 = N-(14,15-epoxy-5Z,8Z,11Z-eicosatrienoyl)-ethanolamine + oxidized [NADPH--hemoprotein reductase] + H2O + H(+). In terms of biological role, a cytochrome P450 monooxygenase that selectively catalyzes the epoxidation of the last double bond of the arachidonoyl moiety of anandamide, potentially modulating endocannabinoid signaling. Has no hydroxylase activity toward various fatty acids, steroids and prostaglandins. Mechanistically, uses molecular oxygen inserting one oxygen atom into a substrate, and reducing the second into a water molecule, with two electrons provided by NADPH via cytochrome P450 reductase (CPR; NADPH-ferrihemoprotein reductase). The chain is Cytochrome P450 4X1 from Rattus norvegicus (Rat).